A 479-amino-acid polypeptide reads, in one-letter code: UPF0164 protein TP_0865 (479 aa).

The first 49 residues, 1 to 49 (MVRMRRRRACSSGGACGCAAVRGARSFLSVRVLGMRIGMSALCLAPLFA), serve as a signal peptide directing secretion.

This sequence belongs to the UPF0164 family.

This Treponema pallidum (strain Nichols) protein is UPF0164 protein TP_0865.